Reading from the N-terminus, the 129-residue chain is Follitropin subunit beta (129 aa).

An N-terminal signal peptide occupies residues 1–20 (MKTLQFFFLFCCWKAICCNS). 6 disulfides stabilise this stretch: cysteine 21–cysteine 69, cysteine 35–cysteine 84, cysteine 38–cysteine 122, cysteine 46–cysteine 100, cysteine 50–cysteine 102, and cysteine 105–cysteine 112. 2 N-linked (GlcNAc...) asparagine glycosylation sites follow: asparagine 25 and asparagine 42.

This sequence belongs to the glycoprotein hormones subunit beta family. As to quaternary structure, heterodimer. The active follitropin is a heterodimer composed of an alpha chain/CGA shared with other hormones and a unique beta chain/FSHB shown here.

The protein resides in the secreted. Its function is as follows. Together with the alpha chain CGA constitutes follitropin, the follicle-stimulating hormone, and provides its biological specificity to the hormone heterodimer. Binds FSHR, a G protein-coupled receptor, on target cells to activate downstream signaling pathways. Follitropin is involved in follicle development and spermatogenesis in reproductive organs. The protein is Follitropin subunit beta (FSHB) of Gorilla gorilla gorilla (Western lowland gorilla).